The sequence spans 318 residues: Beta-ketoacyl-[acyl-carrier-protein] synthase III (318 aa).

Catalysis depends on residues Cys-113 and His-245. An ACP-binding region spans residues 246-250; that stretch reads QANIR. Asn-275 is a catalytic residue.

Belongs to the thiolase-like superfamily. FabH family. In terms of assembly, homodimer.

The protein resides in the cytoplasm. The enzyme catalyses malonyl-[ACP] + acetyl-CoA + H(+) = 3-oxobutanoyl-[ACP] + CO2 + CoA. Its pathway is lipid metabolism; fatty acid biosynthesis. Its function is as follows. Catalyzes the condensation reaction of fatty acid synthesis by the addition to an acyl acceptor of two carbons from malonyl-ACP. Catalyzes the first condensation reaction which initiates fatty acid synthesis and may therefore play a role in governing the total rate of fatty acid production. Possesses both acetoacetyl-ACP synthase and acetyl transacylase activities. Its substrate specificity determines the biosynthesis of branched-chain and/or straight-chain of fatty acids. The protein is Beta-ketoacyl-[acyl-carrier-protein] synthase III of Wolbachia pipientis subsp. Culex pipiens (strain wPip).